A 257-amino-acid chain; its full sequence is Trans-aconitate 2-methyltransferase (257 aa).

The protein belongs to the methyltransferase superfamily. Tam family.

Its subcellular location is the cytoplasm. The catalysed reaction is trans-aconitate + S-adenosyl-L-methionine = (E)-3-(methoxycarbonyl)pent-2-enedioate + S-adenosyl-L-homocysteine. Functionally, catalyzes the S-adenosylmethionine monomethyl esterification of trans-aconitate. The polypeptide is Trans-aconitate 2-methyltransferase (Rhizobium meliloti (strain 1021) (Ensifer meliloti)).